The chain runs to 79 residues: Protein SNA2 (79 aa).

Over 1-6 (MHARDW) the chain is Cytoplasmic. A helical transmembrane segment spans residues 7-27 (FLVFIAIFIPPLAVWLKRGFF). The Vesicular segment spans residues 28-32 (TKDLL). Residues 33–53 (INFLLFLLGFFPGLIHALYVI) traverse the membrane as a helical segment. Over 54–79 (SCHPYEENEARYSHLSSSDDNYGSLA) the chain is Cytoplasmic. Phosphoserine occurs at positions 71 and 77.

Belongs to the UPF0057 (PMP3) family.

It localises to the membrane. The protein resides in the lipid droplet. The protein is Protein SNA2 (SNA2) of Saccharomyces cerevisiae (strain ATCC 204508 / S288c) (Baker's yeast).